A 277-amino-acid chain; its full sequence is Bifunctional protein FolD (277 aa).

NADP(+) is bound by residues 164-166, Ser189, and Val230; that span reads GRS.

This sequence belongs to the tetrahydrofolate dehydrogenase/cyclohydrolase family. In terms of assembly, homodimer.

It carries out the reaction (6R)-5,10-methylene-5,6,7,8-tetrahydrofolate + NADP(+) = (6R)-5,10-methenyltetrahydrofolate + NADPH. The enzyme catalyses (6R)-5,10-methenyltetrahydrofolate + H2O = (6R)-10-formyltetrahydrofolate + H(+). It participates in one-carbon metabolism; tetrahydrofolate interconversion. In terms of biological role, catalyzes the oxidation of 5,10-methylenetetrahydrofolate to 5,10-methenyltetrahydrofolate and then the hydrolysis of 5,10-methenyltetrahydrofolate to 10-formyltetrahydrofolate. This is Bifunctional protein FolD from Exiguobacterium sibiricum (strain DSM 17290 / CCUG 55495 / CIP 109462 / JCM 13490 / 255-15).